The chain runs to 213 residues: Dimethyl sulfoxide reductase transcriptional activator (213 aa).

An HTH bat-type domain is found at Leu-155–Ala-206.

Its function is as follows. Involved in activating dmsEABCD gene expression related to dimethyl sulfoxide (DMSO) reductase. Required for anaerobic respiration on dimethyl sulfoxide (DMSO). The polypeptide is Dimethyl sulfoxide reductase transcriptional activator (Haloferax volcanii (strain ATCC 29605 / DSM 3757 / JCM 8879 / NBRC 14742 / NCIMB 2012 / VKM B-1768 / DS2) (Halobacterium volcanii)).